The chain runs to 355 residues: Probable dual-specificity RNA methyltransferase RlmN (355 aa).

Residues 1 to 20 (MSATPVTQLTPSSQPQQPCS) form a disordered region. E107 (proton acceptor) is an active-site residue. Positions 113-341 (TDKRLTVCVS…VSVRYSRGLE (229 aa)) constitute a Radical SAM core domain. C120 and C346 are disulfide-bonded. Positions 127, 131, and 134 each coordinate [4Fe-4S] cluster. Residues 174–175 (GE), S204, 227–229 (SLH), and N303 contribute to the S-adenosyl-L-methionine site. Catalysis depends on C346, which acts as the S-methylcysteine intermediate.

The protein belongs to the radical SAM superfamily. RlmN family. Requires [4Fe-4S] cluster as cofactor.

The protein resides in the cytoplasm. The enzyme catalyses adenosine(2503) in 23S rRNA + 2 reduced [2Fe-2S]-[ferredoxin] + 2 S-adenosyl-L-methionine = 2-methyladenosine(2503) in 23S rRNA + 5'-deoxyadenosine + L-methionine + 2 oxidized [2Fe-2S]-[ferredoxin] + S-adenosyl-L-homocysteine. It catalyses the reaction adenosine(37) in tRNA + 2 reduced [2Fe-2S]-[ferredoxin] + 2 S-adenosyl-L-methionine = 2-methyladenosine(37) in tRNA + 5'-deoxyadenosine + L-methionine + 2 oxidized [2Fe-2S]-[ferredoxin] + S-adenosyl-L-homocysteine. In terms of biological role, specifically methylates position 2 of adenine 2503 in 23S rRNA and position 2 of adenine 37 in tRNAs. This chain is Probable dual-specificity RNA methyltransferase RlmN, found in Nostoc sp. (strain PCC 7120 / SAG 25.82 / UTEX 2576).